Reading from the N-terminus, the 391-residue chain is Alkanesulfonate monooxygenase (391 aa).

The protein belongs to the SsuD family.

It catalyses the reaction an alkanesulfonate + FMNH2 + O2 = an aldehyde + FMN + sulfite + H2O + 2 H(+). Catalyzes the desulfonation of aliphatic sulfonates. In Methylorubrum extorquens (strain CM4 / NCIMB 13688) (Methylobacterium extorquens), this protein is Alkanesulfonate monooxygenase.